Consider the following 738-residue polypeptide: MEPLFPKRLLSIAVLCVASATAQADTGMNPDNDYWWPNRLSLEPLRDSSLSADPRGANFDYNEALKDLDVEALKKDLKQVMTASQDWWPADYGHYGPFFIRLSWHAAGTYRMIDGRGGADGGMQRFAPLNSWPDNASLDKARRLLQPIKQKYGNNLSWSDLLVLAGTIGMEDMGFPIVGFAFGRDDEWEPEEVNWGPEGQWLTDRRHSGDRKLDKPFGATEMGLIYVNPEGPHGNPDPIAAAHDIRQAFGRMGMSDEETVALIAGGHTFGKAHGAHKPSDCVGADPEAASMEEQGLGWTNKCGKGNAEDTVTSGLEGAWTVSPAEWTHNFLQNLYAFEWELTTSPAGAKQWVPKGGAATNMVPDAHDSSKRHAPIMLTTDLALKEDPAYRKITQRWLEDPEEFTRAFARAWFKLTHRDMGPVSRYKGELVPSDTFVWQDPVPVADYKQIGERDVKKLKAAILDSGLSTSDLVKTAWASAASFRTTDMRGGANGARIRLAPQKDWAVNQPQDLQRVLKVLEGVQREFNKKSRKTKVSLADVIVLGGAAAIEQAAKKAGHKVEVPFFPGRTDASQEMTDVSTFAWLEPKSDGFRNFHAEGYKRNPAEALVERAALLGLTAPEMTALVGGLRVLQANADGSQHGVFTDNPGSLTNDFFVNLVDMSTVWKKSDTEAGLYKGLDRNSGKVKWTATSADLIFGSNSELRAIAEYYSQSDSQKTFVQDFINAWSKVMTADRFDLK.

Positions 1–24 (MEPLFPKRLLSIAVLCVASATAQA) are cleaved as a signal peptide. Residues 104–226 (WHAAGTYRMI…FGATEMGLIY (123 aa)) constitute a cross-link (tryptophyl-tyrosyl-methioninium (Trp-Tyr) (with M-252)). The Proton acceptor role is filled by His105. The tract at residues 191–213 (EEVNWGPEGQWLTDRRHSGDRKL) is disordered. Residues 203–213 (TDRRHSGDRKL) are compositionally biased toward basic and acidic residues. A cross-link (tryptophyl-tyrosyl-methioninium (Tyr-Met) (with W-104)) is located at residues 226–252 (YVNPEGPHGNPDPIAAAHDIRQAFGRM). His267 provides a ligand contact to heme b.

The protein belongs to the peroxidase family. Peroxidase/catalase subfamily. Homodimer or homotetramer. Requires heme b as cofactor. In terms of processing, formation of the three residue Trp-Tyr-Met cross-link is important for the catalase, but not the peroxidase activity of the enzyme.

The enzyme catalyses H2O2 + AH2 = A + 2 H2O. It catalyses the reaction 2 H2O2 = O2 + 2 H2O. Bifunctional enzyme with both catalase and broad-spectrum peroxidase activity. The protein is Catalase-peroxidase of Saccharophagus degradans (strain 2-40 / ATCC 43961 / DSM 17024).